We begin with the raw amino-acid sequence, 111 residues long: Probable 4-amino-4-deoxy-L-arabinose-phosphoundecaprenol flippase subunit ArnE (111 aa).

The Cytoplasmic segment spans residues 1-35; that stretch reads MIWLTLVFASLLSVAGQLCQKQATCFVAISKRRKH. The helical transmembrane segment at 36–56 threads the bilayer; the sequence is IVLWLGLALACLGLAMVLWLL. Residues 40 to 109 form the EamA domain; the sequence is LGLALACLGL…IIGGIVILGS (70 aa). Over 57-60 the chain is Periplasmic; sequence VLQN. A helical membrane pass occupies residues 61 to 81; the sequence is VPVGIAYPMLSLNFVWVTLAA. Over 82–87 the chain is Cytoplasmic; it reads VKLWHE. Residues 88–108 traverse the membrane as a helical segment; that stretch reads PVSPRHWCGVAFIIGGIVILG. Residues 109-111 are Periplasmic-facing; sequence STV.

This sequence belongs to the ArnE family. As to quaternary structure, heterodimer of ArnE and ArnF.

It localises to the cell inner membrane. Its pathway is bacterial outer membrane biogenesis; lipopolysaccharide biosynthesis. Translocates 4-amino-4-deoxy-L-arabinose-phosphoundecaprenol (alpha-L-Ara4N-phosphoundecaprenol) from the cytoplasmic to the periplasmic side of the inner membrane. In Escherichia coli O157:H7, this protein is Probable 4-amino-4-deoxy-L-arabinose-phosphoundecaprenol flippase subunit ArnE.